Here is a 226-residue protein sequence, read N- to C-terminus: V-type proton ATPase subunit E (226 aa).

This sequence belongs to the V-ATPase E subunit family. As to quaternary structure, V-ATPase is a heteromultimeric enzyme made up of two complexes: the ATP-hydrolytic V1 complex and the proton translocation V0 complex. The V1 complex consists of three catalytic AB heterodimers that form a heterohexamer, three peripheral stalks each consisting of EG heterodimers, one central rotor including subunits D and F, and the regulatory subunits C and H. The proton translocation complex V0 consists of the proton transport subunit a, a ring of proteolipid subunits c9c'', rotary subunit d, subunits e and f, and the accessory subunits vah-19/Ac45 and vah-20/PRR. Expressed in the excretory cell and syncytial hypodermal cells (at protein level). Expressed in the intestine (at protein level).

It localises to the cytoplasm. The protein resides in the apical cell membrane. In terms of biological role, subunit of the V1 complex of vacuolar(H+)-ATPase (V-ATPase), a multisubunit enzyme composed of a peripheral complex (V1) that hydrolyzes ATP and a membrane integral complex (V0) that translocates protons. V-ATPase is responsible for acidifying and maintaining the pH of intracellular compartments and in some cell types, is targeted to the plasma membrane, where it is responsible for acidifying the extracellular environment. Regulates pH homeostasis in the intestine. Probably by regulating cytoplasmic pH, required for cell survival in the intestine and hypodermis. Involved in receptor-mediated endocytosis. Involved in embryogenesis and larval development. This Caenorhabditis elegans protein is V-type proton ATPase subunit E.